Here is a 244-residue protein sequence, read N- to C-terminus: Phosphoadenosine 5'-phosphosulfate reductase (244 aa).

Cys239 (nucleophile; cysteine thiosulfonate intermediate) is an active-site residue.

This sequence belongs to the PAPS reductase family. CysH subfamily.

The protein localises to the cytoplasm. It catalyses the reaction [thioredoxin]-disulfide + sulfite + adenosine 3',5'-bisphosphate + 2 H(+) = [thioredoxin]-dithiol + 3'-phosphoadenylyl sulfate. The protein operates within sulfur metabolism; hydrogen sulfide biosynthesis; sulfite from sulfate: step 3/3. Its function is as follows. Catalyzes the formation of sulfite from phosphoadenosine 5'-phosphosulfate (PAPS) using thioredoxin as an electron donor. This Zymomonas mobilis subsp. mobilis (strain ATCC 31821 / ZM4 / CP4) protein is Phosphoadenosine 5'-phosphosulfate reductase.